Reading from the N-terminus, the 360-residue chain is UDP-N-acetylglucosamine--N-acetylmuramyl-(pentapeptide) pyrophosphoryl-undecaprenol N-acetylglucosamine transferase (360 aa).

Positions 198 and 289 each coordinate UDP-N-acetyl-alpha-D-glucosamine.

It belongs to the glycosyltransferase 28 family. MurG subfamily.

Its subcellular location is the cell membrane. The enzyme catalyses Mur2Ac(oyl-L-Ala-gamma-D-Glu-L-Lys-D-Ala-D-Ala)-di-trans,octa-cis-undecaprenyl diphosphate + UDP-N-acetyl-alpha-D-glucosamine = beta-D-GlcNAc-(1-&gt;4)-Mur2Ac(oyl-L-Ala-gamma-D-Glu-L-Lys-D-Ala-D-Ala)-di-trans,octa-cis-undecaprenyl diphosphate + UDP + H(+). The protein operates within cell wall biogenesis; peptidoglycan biosynthesis. Cell wall formation. Catalyzes the transfer of a GlcNAc subunit on undecaprenyl-pyrophosphoryl-MurNAc-pentapeptide (lipid intermediate I) to form undecaprenyl-pyrophosphoryl-MurNAc-(pentapeptide)GlcNAc (lipid intermediate II). The polypeptide is UDP-N-acetylglucosamine--N-acetylmuramyl-(pentapeptide) pyrophosphoryl-undecaprenol N-acetylglucosamine transferase (Streptococcus pyogenes serotype M12 (strain MGAS2096)).